Reading from the N-terminus, the 454-residue chain is Tumor necrosis factor receptor superfamily member 1A (454 aa).

The N-terminal stretch at 1–29 is a signal peptide; that stretch reads MGLPTVPGLLLSLVLLALLMGIHPSGVTG. The Extracellular portion of the chain corresponds to 30–212; sequence LVPSLGDREK…VTNPQDSGTA (183 aa). TNFR-Cys repeat units lie at residues 43 to 82, 83 to 125, 126 to 166, and 167 to 196; these read LCPQ…TVCR, ECEK…DTVC, GCKE…NTVC, and NCHA…KLCL. Cystine bridges form between Cys-44–Cys-58, Cys-59–Cys-72, Cys-62–Cys-81, Cys-84–Cys-99, Cys-102–Cys-117, Cys-105–Cys-125, Cys-127–Cys-143, Cys-146–Cys-158, Cys-149–Cys-166, Cys-168–Cys-179, Cys-182–Cys-195, and Cys-185–Cys-191. N-linked (GlcNAc...) asparagine glycosylation occurs at Asn-54. Asn-151 carries N-linked (GlcNAc...) asparagine glycosylation. Asn-202 carries an N-linked (GlcNAc...) asparagine glycan. The helical transmembrane segment at 213–235 threads the bilayer; that stretch reads VLLPLVILLGLCLLSFIFISLMC. Residues 236-454 are Cytoplasmic-facing; sequence RYPRWRPEVY…APSSTTRLPR (219 aa). Residues 339-349 are N-SMase activation domain (NSD); that stretch reads VQKWEDSAHPQ. Residues 356 to 441 enclose the Death domain; the sequence is LAILYAVVDG…GCLENILEAL (86 aa). Arg-376 carries (Microbial infection) N-beta-linked (GlcNAc) arginine glycosylation.

Binding of TNF to the extracellular domain leads to homotrimerization. The aggregated death domains provide a novel molecular interface that interacts specifically with the death domain of TRADD. Various TRADD-interacting proteins such as TRAFS, RIPK1 and possibly FADD, are recruited to the complex by their association with TRADD. This complex activates at least two distinct signaling cascades, apoptosis and NF-kappa-B signaling. Interacts with BAG4, BABAM2, FEM1B, GRB2, SQSTM1 and TRPC4AP. Interacts with DAB2IP. Interacts directly with NOL3 (via CARD domain); inhibits TNF-signaling pathway. Interacts with SH3RF2, TRADD and RIPK1. SH3RF2 facilitates the recruitment of RIPK1 and TRADD to TNFRSF1A in a TNF-alpha-dependent process. Interacts with PGLYRP1; this interaction is important for cell death induction. Interacts (via death domain) with MADD (via death domain). In terms of processing, (Microbial infection) Glycosylated at Arg-376 by S.typhimurium protein Ssek3: arginine GlcNAcylation prevents homotypic/heterotypic death domain interactions.

The protein resides in the cell membrane. Its subcellular location is the golgi apparatus membrane. In terms of biological role, receptor for TNFSF2/TNF-alpha and homotrimeric TNFSF1/lymphotoxin-alpha. The adapter molecule FADD recruits caspase-8 to the activated receptor. The resulting death-inducing signaling complex (DISC) performs caspase-8 proteolytic activation which initiates the subsequent cascade of caspases (aspartate-specific cysteine proteases) mediating apoptosis. The chain is Tumor necrosis factor receptor superfamily member 1A (Tnfrsf1a) from Mus musculus (Mouse).